The chain runs to 212 residues: Negative modulator of initiation of replication (212 aa).

Interaction with DNA stretches follow at residues 113–114 and 144–148; these read AV and RTRVY.

The protein belongs to the SeqA family. As to quaternary structure, homodimer. Polymerizes to form helical filaments.

The protein localises to the cytoplasm. Negative regulator of replication initiation, which contributes to regulation of DNA replication and ensures that replication initiation occurs exactly once per chromosome per cell cycle. Binds to pairs of hemimethylated GATC sequences in the oriC region, thus preventing assembly of replication proteins and re-initiation at newly replicated origins. Repression is relieved when the region becomes fully methylated. The sequence is that of Negative modulator of initiation of replication from Actinobacillus succinogenes (strain ATCC 55618 / DSM 22257 / CCUG 43843 / 130Z).